A 164-amino-acid chain; its full sequence is Peptide deformylase (164 aa).

Fe cation is bound by residues Cys87 and His129. Residue Glu130 is part of the active site. His133 serves as a coordination point for Fe cation.

Belongs to the polypeptide deformylase family. Requires Fe(2+) as cofactor.

It carries out the reaction N-terminal N-formyl-L-methionyl-[peptide] + H2O = N-terminal L-methionyl-[peptide] + formate. Its function is as follows. Removes the formyl group from the N-terminal Met of newly synthesized proteins. Requires at least a dipeptide for an efficient rate of reaction. N-terminal L-methionine is a prerequisite for activity but the enzyme has broad specificity at other positions. This is Peptide deformylase from Thermotoga neapolitana (strain ATCC 49049 / DSM 4359 / NBRC 107923 / NS-E).